We begin with the raw amino-acid sequence, 36 residues long: Photosystem I reaction center subunit VIII (36 aa).

Residues 7 to 29 (PSILVPLVGIIFPGISMALLFIY) traverse the membrane as a helical segment.

Belongs to the PsaI family.

It localises to the plastid. The protein resides in the chloroplast thylakoid membrane. Functionally, may help in the organization of the PsaL subunit. In Gracilaria tenuistipitata var. liui (Red alga), this protein is Photosystem I reaction center subunit VIII.